Consider the following 158-residue polypeptide: Glycine/sarcosine/betaine reductase complex component A1 (158 aa).

The active site involves U46. Residue U46 is a non-standard amino acid, selenocysteine.

This sequence belongs to the GrdA family. Monomer. Component of the glycine, sarcosine and betaine reductase complexes, together with components B and C.

The enzyme catalyses acetyl phosphate + [thioredoxin]-disulfide + NH4(+) + H2O = [thioredoxin]-dithiol + glycine + phosphate + H(+). The catalysed reaction is acetyl phosphate + methylamine + [thioredoxin]-disulfide + H2O = sarcosine + [thioredoxin]-dithiol + phosphate + H(+). It carries out the reaction acetyl phosphate + trimethylamine + [thioredoxin]-disulfide + H2O = glycine betaine + [thioredoxin]-dithiol + phosphate + H(+). Its function is as follows. In the first step of glycine, betaine and sarcosine reductases, the substrate is bound to component PB via a Schiff base intermediate. Then the PB-activated substrate is nucleophilically attacked by the selenol anion of component PA to transform it to a carboxymethylated selenoether and the respective amine. By action of component PC, acetyl phosphate is formed, leaving component PA in its oxidized state. Finally component PA becomes reduced by the thioredoxin system to start a new catalytic cycle of reductive deamination. This is Glycine/sarcosine/betaine reductase complex component A1 (grdA1) from Photobacterium profundum (strain SS9).